Here is a 147-residue protein sequence, read N- to C-terminus: Prefoldin subunit alpha (147 aa).

Belongs to the prefoldin alpha subunit family. Heterohexamer of two alpha and four beta subunits.

It localises to the cytoplasm. Its function is as follows. Molecular chaperone capable of stabilizing a range of proteins. Seems to fulfill an ATP-independent, HSP70-like function in archaeal de novo protein folding. This chain is Prefoldin subunit alpha, found in Saccharolobus islandicus (strain Y.N.15.51 / Yellowstone #2) (Sulfolobus islandicus).